We begin with the raw amino-acid sequence, 570 residues long: Zeta-carotene desaturase, chloroplastic/chromoplastic (570 aa).

A compositionally biased stretch (low complexity) spans 1 to 16; sequence MASVAATTTLAPALAP. Residues 1 to 33 form a disordered region; it reads MASVAATTTLAPALAPRRARPGTGLVPPRRASA.

Belongs to the zeta carotene desaturase family. Requires NAD(+) as cofactor. NADP(+) is required as a cofactor. The cofactor is FAD.

The protein resides in the plastid. It is found in the chloroplast. It localises to the chromoplast. The catalysed reaction is 9,9'-di-cis-zeta-carotene + 2 a quinone = 7,7',9,9'-tetra-cis-lycopene + 2 a quinol. It functions in the pathway carotenoid biosynthesis; lycopene biosynthesis. Its function is as follows. Catalyzes the conversion of zeta-carotene to lycopene via the intermediary of neurosporene. It carries out two consecutive desaturations (introduction of double bonds) at positions C-7 and C-7'. This Zea mays (Maize) protein is Zeta-carotene desaturase, chloroplastic/chromoplastic (ZDS1).